The following is a 363-amino-acid chain: MTLSSEREAAKAAFLSANGFGDVRRESLGGDASTRAYERLHRGEQSYIFMDQPPSLETAPCPPDASPAERAALGYNALARLAAGRVDAFVACAGWLNAQGLSAPKVLAADPAAGLAVLEDLGDDLYARLIEAGTDEAPLYDAAIDGLLAIHAAPTPKVLRYDGSTWPLLTYDDLALKTAHDIFVEWQPRFRDISFDAAALAEWEAIWAPIRAKGEADATVFCHRDYHAENLIWLPERDGAARVGMLDFQDAVLAHPAWDLSMLLHDARRTVSPEREAACLDRYLAARPELDRTAFLAGYHALGALNIIRILGIFARLVTRDGKPRYADFIPRLWVYLDVCFADPALAELKAWFDRYVPVETRR.

Belongs to the kinase AmgK family.

It catalyses the reaction N-acetyl-D-muramate + ATP = N-acetyl-alpha-D-muramate 1-phosphate + ADP + H(+). The catalysed reaction is N-acetyl-D-glucosamine + ATP = N-acetyl-alpha-D-glucosamine 1-phosphate + ADP + H(+). The protein operates within cell wall biogenesis; peptidoglycan recycling. Its function is as follows. Sugar kinase that catalyzes the ATP-dependent phosphorylation of N-acetylmuramate (MurNAc) and N-acetylglucosamine (GlcNAc) at its C1 hydroxyl group, leading to MurNAc alpha-1P and GlcNAc alpha-1P, respectively. Is likely involved in peptidoglycan recycling as part of a cell wall recycling pathway that bypasses de novo biosynthesis of the peptidoglycan precursor UDP-MurNAc. Is able to complement the fosfomycin sensitivity phenotype of a P.putida mutant lacking amgK. The chain is N-acetylmuramate/N-acetylglucosamine kinase from Caulobacter vibrioides (strain ATCC 19089 / CIP 103742 / CB 15) (Caulobacter crescentus).